We begin with the raw amino-acid sequence, 130 residues long: Small ribosomal subunit protein uS9 (130 aa).

The protein belongs to the universal ribosomal protein uS9 family. In terms of assembly, part of the 30S ribosomal subunit.

This Bacillus subtilis (strain 168) protein is Small ribosomal subunit protein uS9 (rpsI).